The chain runs to 251 residues: Cell division protein ZapD (251 aa).

This sequence belongs to the ZapD family. As to quaternary structure, interacts with FtsZ.

The protein resides in the cytoplasm. Its function is as follows. Cell division factor that enhances FtsZ-ring assembly. Directly interacts with FtsZ and promotes bundling of FtsZ protofilaments, with a reduction in FtsZ GTPase activity. The polypeptide is Cell division protein ZapD (Burkholderia cenocepacia (strain ATCC BAA-245 / DSM 16553 / LMG 16656 / NCTC 13227 / J2315 / CF5610) (Burkholderia cepacia (strain J2315))).